The chain runs to 370 residues: Cell division protein DivIB (370 aa).

The tract at residues 1-65 (MKKKKDEELT…SNKKGTKRIV (65 aa)) is disordered. The Cytoplasmic segment spans residues 1 to 74 (MKKKKDEELT…VKEQRLSRQK (74 aa)). 2 stretches are compositionally biased toward basic residues: residues 25–34 (SRFKRKRKAT) and 47–63 (RNNR…GTKR). A helical membrane pass occupies residues 75–95 (LGILIGSTLIVIALFFGYFYS). Residues 96-370 (SISRVQKFSV…STVNTQQDID (275 aa)) lie on the Extracellular side of the membrane. Residues 98–169 (SRVQKFSVSG…GKVKIKVKEN (72 aa)) enclose the POTRA domain. The interval 295-370 (SGWTDEAKAA…STVNTQQDID (76 aa)) is disordered. 2 stretches are compositionally biased toward low complexity: residues 304-314 (ASESSKSAESS) and 327-342 (SESA…STET). A compositionally biased stretch (polar residues) spans 356–370 (SSNAESTVNTQQDID).

The protein belongs to the FtsQ/DivIB family. DivIB subfamily.

It localises to the cell membrane. In terms of biological role, cell division protein that may be involved in stabilizing or promoting the assembly of the division complex. The protein is Cell division protein DivIB of Pediococcus pentosaceus (strain ATCC 25745 / CCUG 21536 / LMG 10740 / 183-1w).